A 151-amino-acid polypeptide reads, in one-letter code: Group 10 secretory phospholipase A2 (151 aa).

The first 17 residues, M1–S17, serve as a signal peptide directing secretion. Residues E18–R28 constitute a propeptide that is removed on maturation. 8 cysteine pairs are disulfide-bonded: C39-C97, C53-C143, C55-C71, C70-C125, C76-C150, C77-C118, C86-C111, and C104-C116. Ca(2+) is bound by residues Y54, G56, and G58. Residue H74 is part of the active site. Residue D75 coordinates Ca(2+). Residue D119 is part of the active site.

This sequence belongs to the phospholipase A2 family. Interacts with PLA2R1; this interaction mediates PLA2G10 clearance and inactivation. Ca(2+) serves as cofactor.

It is found in the secreted. Its subcellular location is the lysosome. It localises to the cytoplasmic vesicle. The protein localises to the secretory vesicle. The protein resides in the acrosome. The enzyme catalyses a 1,2-diacyl-sn-glycero-3-phosphocholine + H2O = a 1-acyl-sn-glycero-3-phosphocholine + a fatty acid + H(+). It catalyses the reaction 1-hexadecanoyl-2-(9Z-octadecenoyl)-sn-glycero-3-phosphocholine + H2O = 1-hexadecanoyl-sn-glycero-3-phosphocholine + (9Z)-octadecenoate + H(+). The catalysed reaction is 1-octadecanoyl-2-(5Z,8Z,11Z,14Z-eicosatetraenoyl)-sn-glycero-3-phosphocholine + H2O = 1-octadecanoyl-sn-glycero-3-phosphocholine + (5Z,8Z,11Z,14Z)-eicosatetraenoate + H(+). It carries out the reaction 1,2-dihexadecanoyl-sn-glycero-3-phosphocholine + H2O = 1-hexadecanoyl-sn-glycero-3-phosphocholine + hexadecanoate + H(+). The enzyme catalyses 1-hexadecanoyl-2-(9Z-octadecenoyl)-sn-glycero-3-phosphoglycerol + H2O = 1-hexadecanoyl-sn-glycero-3-phosphoglycerol + (9Z)-octadecenoate + H(+). It catalyses the reaction 1,2-dihexadecanoyl-sn-glycero-3-phospho-(1'-sn-glycerol) + H2O = 1-hexadecanoyl-sn-glycero-3-phospho-(1'-sn-glycerol) + hexadecanoate + H(+). The catalysed reaction is 1-hexadecanoyl-2-(9Z-octadecenoyl)-sn-glycero-3-phospho-L-serine + H2O = 1-hexadecanoyl-sn-glycero-3-phospho-L-serine + (9Z)-octadecenoate + H(+). It carries out the reaction 1-hexadecanoyl-2-(9Z,12Z-octadecadienoyl)-sn-glycero-3-phosphoethanolamine + H2O = 1-hexadecanoyl-sn-glycero-3-phosphoethanolamine + (9Z,12Z)-octadecadienoate + H(+). The enzyme catalyses 1-hexadecanoyl-2-(9Z-octadecenoyl)-sn-glycero-3-phosphate + H2O = 1-hexadecanoyl-sn-glycero-3-phosphate + (9Z)-octadecenoate + H(+). It catalyses the reaction 1-O-hexadecyl-2-acetyl-sn-glycero-3-phosphocholine + H2O = 1-O-hexadecyl-sn-glycero-3-phosphocholine + acetate + H(+). Its function is as follows. Secretory calcium-dependent phospholipase A2 that primarily targets extracellular phospholipids. Hydrolyzes the ester bond of the fatty acyl group attached at sn-2 position of phospholipids with preference for phosphatidylcholines and phosphatidylglycerols over phosphatidylethanolamines. Preferentially releases sn-2 omega-6 and omega-3 polyunsaturated fatty acyl (PUFA) chains over saturated fatty acyls. Contributes to phospholipid remodeling of very low-density lipoprotein (VLDL), low-density lipoprotein (LDL) and high-density lipoprotein (HDL) particles. Hydrolyzes LDL phospholipids releasing unsaturated fatty acids that regulate macrophage differentiation toward foam cells. Efficiently hydrolyzes and inactivates platelet activating factor (PAF), a potent lipid mediator present in oxidized LDL. May act in an autocrine and paracrine manner. Secreted by lung epithelium, targets membrane phospholipids of infiltrating eosinophils, releasing arachidonate and boosting eicosanoid and cysteinyl leukotriene synthesis involved in airway inflammatory response. Secreted by gut epithelium, hydrolyzes dietary and biliary phosphatidylcholines in the gastrointestinal lumen. Plays a stem cell regulator role in colon epithelium. Within intracellular compartment, mediates Paneth-like cell differentiation and its stem cell supporting functions by inhibiting the Wnt signaling pathway in intestinal stem cell (ISC). Secreted in the intestinal lumen upon inflammation, acts in an autocrine way and promotes prostaglandin E2 synthesis that stimulates Wnt signaling pathway in ISCs and tissue regeneration. May participate in hair follicle morphogenesis by regulating phosphatidylethanolamines metabolism at the outermost epithelial layer and facilitating melanin synthesis. By releasing lysophosphatidylcholines (LPCs) at sperm acrosome, controls sperm cell capacitation, acrosome reaction and overall fertility. May promote neurite outgrowth in neuron fibers involved in nociception. Contributes to lipid remodeling of cellular membranes and generation of lipid mediators involved in pathogen clearance. Cleaves sn-2 fatty acyl chains of phosphatidylglycerols and phosphatidylethanolamines, which are major components of membrane phospholipids in bacteria. Displays bactericidal activity against Gram-positive bacteria by directly hydrolyzing phospholipids of the bacterial membrane. In pulmonary epithelium, may contribute to host defense response against adenoviral infection. Prevents adenovirus entry into host cells by hydrolyzing host cell plasma membrane, releasing C16:0 LPCs that inhibit virus-mediated membrane fusion and viral infection. Likely prevents adenoviral entry into the endosomes of host cells. May play a role in maturation and activation of innate immune cells including macrophages, group 2 innate lymphoid cells and mast cells. In Rattus norvegicus (Rat), this protein is Group 10 secretory phospholipase A2 (Pla2g10).